The sequence spans 65 residues: Large ribosomal subunit protein uL30 (65 aa).

The protein belongs to the universal ribosomal protein uL30 family. As to quaternary structure, part of the 50S ribosomal subunit.

The protein is Large ribosomal subunit protein uL30 of Rickettsia bellii (strain OSU 85-389).